A 213-amino-acid polypeptide reads, in one-letter code: MRTIDKRIAPNVKLATALVARAPTLTLAYDARCKSRLAATLDTGEEVALVLPRGTVLRDGDVLVADDGALVRVAAAHEAVLLVRAPDALTLTRAAYHLGNRHTPVEVGAGCLKLEYDPVLADMLTRLGATIERANAPFQPEAGAYGGGHRHGHDATFAEDYALAQQVFDEHHGRSHSHSHSHSHDHDHDHDHDHDHDHQHGPSCSHGHGHGHR.

Residues 170-213 (EHHGRSHSHSHSHSHDHDHDHDHDHDHDHQHGPSCSHGHGHGHR) are disordered. The segment covering 182–200 (HSHDHDHDHDHDHDHDHQH) has biased composition (basic and acidic residues).

This sequence belongs to the UreE family.

The protein localises to the cytoplasm. Its function is as follows. Involved in urease metallocenter assembly. Binds nickel. Probably functions as a nickel donor during metallocenter assembly. This is Urease accessory protein UreE from Burkholderia thailandensis (strain ATCC 700388 / DSM 13276 / CCUG 48851 / CIP 106301 / E264).